The following is a 932-amino-acid chain: UPF0182 protein Amet_0022 (932 aa).

Transmembrane regions (helical) follow at residues 14 to 34 (VIIG…SEIL), 60 to 80 (LQIG…YLIG), 104 to 124 (ILIL…AGSL), 166 to 186 (TSIL…MFLI), 208 to 228 (LLQI…LVLA), 256 to 276 (VTLW…TGVV), and 286 to 306 (LLLI…VISL).

Belongs to the UPF0182 family.

Its subcellular location is the cell membrane. The sequence is that of UPF0182 protein Amet_0022 from Alkaliphilus metalliredigens (strain QYMF).